Consider the following 325-residue polypeptide: N-acetyl-gamma-glutamyl-phosphate reductase (325 aa).

Cys-131 is an active-site residue.

It belongs to the NAGSA dehydrogenase family. Type 1 subfamily.

The protein localises to the cytoplasm. The enzyme catalyses N-acetyl-L-glutamate 5-semialdehyde + phosphate + NADP(+) = N-acetyl-L-glutamyl 5-phosphate + NADPH + H(+). Its pathway is amino-acid biosynthesis; L-arginine biosynthesis; N(2)-acetyl-L-ornithine from L-glutamate: step 3/4. Catalyzes the NADPH-dependent reduction of N-acetyl-5-glutamyl phosphate to yield N-acetyl-L-glutamate 5-semialdehyde. The protein is N-acetyl-gamma-glutamyl-phosphate reductase of Methylobacterium sp. (strain 4-46).